The following is a 369-amino-acid chain: Peptide chain release factor 2 (369 aa).

Residue Q252 is modified to N5-methylglutamine.

The protein belongs to the prokaryotic/mitochondrial release factor family. Methylated by PrmC. Methylation increases the termination efficiency of RF2.

Its subcellular location is the cytoplasm. Functionally, peptide chain release factor 2 directs the termination of translation in response to the peptide chain termination codons UGA and UAA. In Staphylococcus aureus (strain MRSA252), this protein is Peptide chain release factor 2.